A 109-amino-acid polypeptide reads, in one-letter code: Iron-sulfur cluster assembly protein CyaY (109 aa).

It belongs to the frataxin family.

Functionally, involved in iron-sulfur (Fe-S) cluster assembly. May act as a regulator of Fe-S biogenesis. This Bordetella bronchiseptica (strain ATCC BAA-588 / NCTC 13252 / RB50) (Alcaligenes bronchisepticus) protein is Iron-sulfur cluster assembly protein CyaY.